The chain runs to 253 residues: Endonuclease NucS (253 aa).

Positions 63–91 (IDDPDTDFTDGSSVGNSEEQGTDGSAHTA) are disordered. The segment covering 71–87 (TDGSSVGNSEEQGTDGS) has biased composition (polar residues).

It belongs to the NucS endonuclease family.

The protein resides in the cytoplasm. Functionally, cleaves both 3' and 5' ssDNA extremities of branched DNA structures. The sequence is that of Endonuclease NucS from Corynebacterium kroppenstedtii (strain DSM 44385 / JCM 11950 / CIP 105744 / CCUG 35717).